The following is a 326-amino-acid chain: Tagatose 1,6-diphosphate aldolase (326 aa).

This sequence belongs to the aldolase LacD family.

It carries out the reaction D-tagatofuranose 1,6-bisphosphate = D-glyceraldehyde 3-phosphate + dihydroxyacetone phosphate. It participates in carbohydrate metabolism; D-tagatose 6-phosphate degradation; D-glyceraldehyde 3-phosphate and glycerone phosphate from D-tagatose 6-phosphate: step 2/2. The polypeptide is Tagatose 1,6-diphosphate aldolase (Staphylococcus aureus (strain bovine RF122 / ET3-1)).